The primary structure comprises 463 residues: General transcription factor IIH subunit 4 (463 aa).

This sequence belongs to the TFB2 family. Component of the 7-subunit TFIIH core complex composed of XPB/ERCC3, XPD/ERCC2, GTF2H1, GTF2H2, GTF2H3, GTF2H4 and GTF2H5, which is active in NER. The core complex associates with the 3-subunit CDK-activating kinase (CAK) module composed of CCNH/cyclin H, CDK7 and MNAT1 to form the 10-subunit holoenzyme (holo-TFIIH) active in transcription. Part of TBP-based Pol II pre-initiation complex (PIC), in which Pol II core assembles with general transcription factors and other specific initiation factors including GTF2E1, GTF2E2, GTF2F1, GTF2F2, TCEA1, ERCC2, ERCC3, GTF2H2, GTF2H3, GTF2H4, GTF2H5, GTF2A1, GTF2A2, GTF2B and TBP; this large multi-subunit PIC complex mediates DNA unwinding and targets Pol II core to the transcription start site where the first phosphodiester bond forms.

The protein resides in the nucleus. In terms of biological role, component of the general transcription and DNA repair factor IIH (TFIIH) core complex, which is involved in general and transcription-coupled nucleotide excision repair (NER) of damaged DNA and, when complexed to CAK, in RNA transcription by RNA polymerase II. In NER, TFIIH acts by opening DNA around the lesion to allow the excision of the damaged oligonucleotide and its replacement by a new DNA fragment. In transcription, TFIIH has an essential role in transcription initiation. When the pre-initiation complex (PIC) has been established, TFIIH is required for promoter opening and promoter escape. Phosphorylation of the C-terminal tail (CTD) of the largest subunit of RNA polymerase II by the kinase module CAK controls the initiation of transcription. This Mus musculus (Mouse) protein is General transcription factor IIH subunit 4 (Gtf2h4).